A 648-amino-acid polypeptide reads, in one-letter code: Transcription initiation factor TFIID subunit 5 (648 aa).

The span at 1–13 (MDSENSSSHSISS) shows a compositional bias: low complexity. Residues 1–21 (MDSENSSSHSISSPQMFQNTH) form a disordered region. The region spanning 35–67 (MNNESLQMIIGYLRRNGLTETEELLTREAGPVL) is the LisH domain. WD repeat units lie at residues 317-358 (NAPI…KKLR), 392-431 (GHGG…NAVI), 433-472 (RTPA…PLRI), 475-514 (DPYG…RVRI), 517-556 (GHKA…LVAA), and 560-599 (EQAG…GTVL).

Belongs to the WD repeat TAF5 family. As to quaternary structure, component of the TFIID basal transcription factor complex, composed of TATA-box-binding protein tbp-1, and a number of TBP-associated factors (TAFs).

Its subcellular location is the nucleus. In terms of biological role, the TFIID basal transcription factor complex plays a major role in the initiation of RNA polymerase II (Pol II)-dependent transcription. TFIID recognizes and binds promoters via its subunit tbp-1, a TATA-box-binding protein, and promotes assembly of the pre-initiation complex (PIC). The TFIID complex consists of tbp-1 and TBP-associated factors (TAFs), including taf-5. Essential for early embryonic development, but not required for transcription of some genes; probably acts via activating transcription initiation by RNA Pol II, as part of the TFIID complex. The protein is Transcription initiation factor TFIID subunit 5 of Caenorhabditis elegans.